Here is a 336-residue protein sequence, read N- to C-terminus: Ketol-acid reductoisomerase (NADP(+)) (336 aa).

A KARI N-terminal Rossmann domain is found at 5 to 185 (SKIYTDKDSN…GATRAGVIPT (181 aa)). NADP(+) is bound by residues 28–31 (YGSQ), Ser-56, and 86–89 (DMVQ). His-111 is a catalytic residue. Gly-137 lines the NADP(+) pocket. Residues 186–331 (TFKEETETDL…NQLKDLIQKG (146 aa)) form the KARI C-terminal knotted domain. 4 residues coordinate Mg(2+): Asp-194, Glu-198, Glu-230, and Glu-234. Ser-255 contributes to the substrate binding site.

The protein belongs to the ketol-acid reductoisomerase family. It depends on Mg(2+) as a cofactor.

The catalysed reaction is (2R)-2,3-dihydroxy-3-methylbutanoate + NADP(+) = (2S)-2-acetolactate + NADPH + H(+). The enzyme catalyses (2R,3R)-2,3-dihydroxy-3-methylpentanoate + NADP(+) = (S)-2-ethyl-2-hydroxy-3-oxobutanoate + NADPH + H(+). It participates in amino-acid biosynthesis; L-isoleucine biosynthesis; L-isoleucine from 2-oxobutanoate: step 2/4. The protein operates within amino-acid biosynthesis; L-valine biosynthesis; L-valine from pyruvate: step 2/4. In terms of biological role, involved in the biosynthesis of branched-chain amino acids (BCAA). Catalyzes an alkyl-migration followed by a ketol-acid reduction of (S)-2-acetolactate (S2AL) to yield (R)-2,3-dihydroxy-isovalerate. In the isomerase reaction, S2AL is rearranged via a Mg-dependent methyl migration to produce 3-hydroxy-3-methyl-2-ketobutyrate (HMKB). In the reductase reaction, this 2-ketoacid undergoes a metal-dependent reduction by NADPH to yield (R)-2,3-dihydroxy-isovalerate. This chain is Ketol-acid reductoisomerase (NADP(+)), found in Saccharolobus islandicus (strain Y.N.15.51 / Yellowstone #2) (Sulfolobus islandicus).